Reading from the N-terminus, the 179-residue chain is Crossover junction endodeoxyribonuclease RuvC (179 aa).

Active-site residues include aspartate 12, glutamate 72, and aspartate 144. Mg(2+) is bound by residues aspartate 12, glutamate 72, and aspartate 144.

It belongs to the RuvC family. As to quaternary structure, homodimer which binds Holliday junction (HJ) DNA. The HJ becomes 2-fold symmetrical on binding to RuvC with unstacked arms; it has a different conformation from HJ DNA in complex with RuvA. In the full resolvosome a probable DNA-RuvA(4)-RuvB(12)-RuvC(2) complex forms which resolves the HJ. The cofactor is Mg(2+).

Its subcellular location is the cytoplasm. The catalysed reaction is Endonucleolytic cleavage at a junction such as a reciprocal single-stranded crossover between two homologous DNA duplexes (Holliday junction).. Functionally, the RuvA-RuvB-RuvC complex processes Holliday junction (HJ) DNA during genetic recombination and DNA repair. Endonuclease that resolves HJ intermediates. Cleaves cruciform DNA by making single-stranded nicks across the HJ at symmetrical positions within the homologous arms, yielding a 5'-phosphate and a 3'-hydroxyl group; requires a central core of homology in the junction. The consensus cleavage sequence is 5'-(A/T)TT(C/G)-3'. Cleavage occurs on the 3'-side of the TT dinucleotide at the point of strand exchange. HJ branch migration catalyzed by RuvA-RuvB allows RuvC to scan DNA until it finds its consensus sequence, where it cleaves and resolves the cruciform DNA. The sequence is that of Crossover junction endodeoxyribonuclease RuvC from Dechloromonas aromatica (strain RCB).